The chain runs to 94 residues: MIKSELVQIIATRNPHLFLRDVENIVGAIFDEITDALAEGNRVELRGFGAFSVKNRPARTGRNPRTGESVEVEEKWVPFFKTGKELRERLNGGK.

This sequence belongs to the bacterial histone-like protein family. Heterodimer of an alpha and a beta chain.

Functionally, this protein is one of the two subunits of integration host factor, a specific DNA-binding protein that functions in genetic recombination as well as in transcriptional and translational control. The polypeptide is Integration host factor subunit beta (Mesorhizobium japonicum (strain LMG 29417 / CECT 9101 / MAFF 303099) (Mesorhizobium loti (strain MAFF 303099))).